The sequence spans 1661 residues: Pentafunctional AROM polypeptide (1661 aa).

The tract at residues 1 to 388 (MATNGVKAEP…YEKKASSVVD (388 aa)) is 3-dehydroquinate synthase. Residues 50 to 52 (DTN), 87 to 90 (ETSK), 118 to 120 (GGV), and aspartate 123 contribute to the NAD(+) site. Residue arginine 134 coordinates 7-phospho-2-dehydro-3-deoxy-D-arabino-heptonate. Position 143 to 144 (143 to 144 (TT)) interacts with NAD(+). Positions 150 and 156 each coordinate 7-phospho-2-dehydro-3-deoxy-D-arabino-heptonate. An NAD(+)-binding site is contributed by lysine 165. Position 166 (asparagine 166) interacts with 7-phospho-2-dehydro-3-deoxy-D-arabino-heptonate. Residues 183–186 (FLET) and asparagine 194 each bind NAD(+). Glutamate 198 provides a ligand contact to Zn(2+). 7-phospho-2-dehydro-3-deoxy-D-arabino-heptonate-binding positions include 198-201 (EVVK) and lysine 254. Residue glutamate 264 is the Proton acceptor; for 3-dehydroquinate synthase activity of the active site. 7-phospho-2-dehydro-3-deoxy-D-arabino-heptonate is bound by residues 268-272 (RNLLN) and histidine 275. Histidine 275 serves as a coordination point for Zn(2+). Histidine 279 acts as the Proton acceptor; for 3-dehydroquinate synthase activity in catalysis. The 7-phospho-2-dehydro-3-deoxy-D-arabino-heptonate site is built by histidine 291 and lysine 360. Histidine 291 is a binding site for Zn(2+). An EPSP synthase region spans residues 401–850 (VHPGIPSDLN…WDILNQQFKA (450 aa)). Catalysis depends on cysteine 832, which acts as the For EPSP synthase activity. The tract at residues 872-1064 (QKSIFIIGMR…KKKKQSFFVC (193 aa)) is shikimate kinase. Residue 879-886 (GMRGAGKT) coordinates ATP. The tract at residues 1065–1285 (LSAPNLEPCA…TAPGQLSAAD (221 aa)) is 3-dehydroquinase. Catalysis depends on histidine 1188, which acts as the Proton acceptor; for 3-dehydroquinate dehydratase activity. Lysine 1216 serves as the catalytic Schiff-base intermediate with substrate; for 3-dehydroquinate dehydratase activity. Residues 1298–1661 (TKKFCIFGSP…LTYSWSLGDW (364 aa)) are shikimate dehydrogenase.

In the N-terminal section; belongs to the sugar phosphate cyclases superfamily. Dehydroquinate synthase family. The protein in the 2nd section; belongs to the EPSP synthase family. This sequence in the 3rd section; belongs to the shikimate kinase family. It in the 4th section; belongs to the type-I 3-dehydroquinase family. In the C-terminal section; belongs to the shikimate dehydrogenase family. As to quaternary structure, homodimer. Zn(2+) serves as cofactor.

It localises to the cytoplasm. It carries out the reaction 7-phospho-2-dehydro-3-deoxy-D-arabino-heptonate = 3-dehydroquinate + phosphate. The catalysed reaction is 3-dehydroquinate = 3-dehydroshikimate + H2O. The enzyme catalyses shikimate + NADP(+) = 3-dehydroshikimate + NADPH + H(+). It catalyses the reaction shikimate + ATP = 3-phosphoshikimate + ADP + H(+). It carries out the reaction 3-phosphoshikimate + phosphoenolpyruvate = 5-O-(1-carboxyvinyl)-3-phosphoshikimate + phosphate. Its pathway is metabolic intermediate biosynthesis; chorismate biosynthesis; chorismate from D-erythrose 4-phosphate and phosphoenolpyruvate: step 2/7. The protein operates within metabolic intermediate biosynthesis; chorismate biosynthesis; chorismate from D-erythrose 4-phosphate and phosphoenolpyruvate: step 3/7. It participates in metabolic intermediate biosynthesis; chorismate biosynthesis; chorismate from D-erythrose 4-phosphate and phosphoenolpyruvate: step 4/7. It functions in the pathway metabolic intermediate biosynthesis; chorismate biosynthesis; chorismate from D-erythrose 4-phosphate and phosphoenolpyruvate: step 5/7. Its pathway is metabolic intermediate biosynthesis; chorismate biosynthesis; chorismate from D-erythrose 4-phosphate and phosphoenolpyruvate: step 6/7. Its function is as follows. The AROM polypeptide catalyzes 5 consecutive enzymatic reactions in prechorismate polyaromatic amino acid biosynthesis. This chain is Pentafunctional AROM polypeptide, found in Phaeosphaeria nodorum (strain SN15 / ATCC MYA-4574 / FGSC 10173) (Glume blotch fungus).